The sequence spans 364 residues: Tyrosine-protein phosphatase YVH1 (364 aa).

A Tyrosine-protein phosphatase domain is found at 11-173 (EVTRILGGIY…LHLFEKMGGD (163 aa)). The Phosphocysteine intermediate role is filled by C117. A Phosphoserine modification is found at S196.

Belongs to the protein-tyrosine phosphatase family. Non-receptor class dual specificity subfamily.

It carries out the reaction O-phospho-L-tyrosyl-[protein] + H2O = L-tyrosyl-[protein] + phosphate. Functionally, may be directly involved in signal transduction and/or cell cycle regulation. It is necessary for maintaining growth rate or spore germination. Could show both activity toward tyrosine-protein phosphate as well as with serine-protein phosphate. This chain is Tyrosine-protein phosphatase YVH1 (YVH1), found in Saccharomyces cerevisiae (strain ATCC 204508 / S288c) (Baker's yeast).